The following is a 391-amino-acid chain: 1-deoxy-D-xylulose 5-phosphate reductoisomerase (391 aa).

Positions 11, 12, 13, 14, and 126 each coordinate NADPH. Residue lysine 127 coordinates 1-deoxy-D-xylulose 5-phosphate. Glutamate 128 lines the NADPH pocket. Position 152 (aspartate 152) interacts with Mn(2+). 1-deoxy-D-xylulose 5-phosphate contacts are provided by serine 153, glutamate 154, serine 176, and histidine 199. Glutamate 154 lines the Mn(2+) pocket. Glycine 205 provides a ligand contact to NADPH. 1-deoxy-D-xylulose 5-phosphate contacts are provided by serine 212, asparagine 217, lysine 218, and glutamate 221. Residue glutamate 221 participates in Mn(2+) binding.

It belongs to the DXR family. It depends on Mg(2+) as a cofactor. Mn(2+) is required as a cofactor.

The enzyme catalyses 2-C-methyl-D-erythritol 4-phosphate + NADP(+) = 1-deoxy-D-xylulose 5-phosphate + NADPH + H(+). The protein operates within isoprenoid biosynthesis; isopentenyl diphosphate biosynthesis via DXP pathway; isopentenyl diphosphate from 1-deoxy-D-xylulose 5-phosphate: step 1/6. Its function is as follows. Catalyzes the NADPH-dependent rearrangement and reduction of 1-deoxy-D-xylulose-5-phosphate (DXP) to 2-C-methyl-D-erythritol 4-phosphate (MEP). The polypeptide is 1-deoxy-D-xylulose 5-phosphate reductoisomerase (Acidithiobacillus ferrooxidans (strain ATCC 53993 / BNL-5-31) (Leptospirillum ferrooxidans (ATCC 53993))).